Reading from the N-terminus, the 220-residue chain is Ribonuclease HII (220 aa).

In terms of domain architecture, RNase H type-2 spans 32–220 (KHIAGIDEAG…FAPIKGRFDC (189 aa)). The a divalent metal cation site is built by aspartate 38, glutamate 39, and aspartate 130.

The protein belongs to the RNase HII family. Mn(2+) serves as cofactor. Mg(2+) is required as a cofactor.

The protein resides in the cytoplasm. The catalysed reaction is Endonucleolytic cleavage to 5'-phosphomonoester.. Functionally, endonuclease that specifically degrades the RNA of RNA-DNA hybrids. The chain is Ribonuclease HII from Brucella canis (strain ATCC 23365 / NCTC 10854 / RM-666).